The sequence spans 279 residues: Pantothenate synthetase (279 aa).

26 to 33 lines the ATP pocket; sequence MGNLHEGH. Residue His-33 is the Proton donor of the active site. Gln-57 lines the (R)-pantoate pocket. Gln-57 lines the beta-alanine pocket. 144–147 contributes to the ATP binding site; the sequence is GKKD. Residue Gln-150 participates in (R)-pantoate binding. ATP is bound by residues Val-173 and 181–184; that span reads LSSR.

This sequence belongs to the pantothenate synthetase family. As to quaternary structure, homodimer.

The protein localises to the cytoplasm. It carries out the reaction (R)-pantoate + beta-alanine + ATP = (R)-pantothenate + AMP + diphosphate + H(+). It functions in the pathway cofactor biosynthesis; (R)-pantothenate biosynthesis; (R)-pantothenate from (R)-pantoate and beta-alanine: step 1/1. Catalyzes the condensation of pantoate with beta-alanine in an ATP-dependent reaction via a pantoyl-adenylate intermediate. The polypeptide is Pantothenate synthetase (Burkholderia orbicola (strain MC0-3)).